Reading from the N-terminus, the 181-residue chain is MGNVFGSLFKGLFGKREMRILMVGLDAAGKTTILYKLKLGEIVTTIPTIGFNVETVEYKNISFTVWDVGGQDKIRPLWRHYFQNTQGLIFVVDSNDRERVGEAREELMRMLAEDELRDAVLLVFANKQDLPQAMNAAEVTDKLGLHSLRNRSWYIQATCATSGDGLYEGLDWLSNQLKNRS.

G2 is lipidated: N-myristoyl glycine. The tract at residues 3–16 (NVFGSLFKGLFGKR) is important for the stable binding to the membranes. Residues 24-32 (GLDAAGKTT), 126-129 (NKQD), and A160 each bind GTP.

Belongs to the small GTPase superfamily. Arf family. In terms of tissue distribution, expressed in hypodermis, intestine, spermatheca, uterus, gonadal sheath, vulva cells, pharynx muscle, body wall muscle, head neurons, ventral nerve cord.

It localises to the golgi apparatus membrane. The enzyme catalyses GTP + H2O = GDP + phosphate + H(+). Its activity is regulated as follows. Alternates between an inactive GDP-bound form and an active GTP-bound form. Activated by a guanine nucleotide-exchange factor (GEF) and inactivated by GTPase-activating protein (GAP). Functionally, small GTPase involved in protein trafficking between different compartments. Modulates vesicle budding and uncoating within the Golgi complex. In its GTP-bound form, triggers the recruitment of coatomer proteins to the Golgi membrane. The hydrolysis of ARF1-bound GTP, which is mediated by ARFGAPs proteins, is required for dissociation of coat proteins from Golgi membranes and vesicles. Involved in endoplasmic reticulum dynamics during embryogenesis. Also required for adult germline function. Plays a role in cell shedding during embryogenesis probably by promoting the endocytosis of cell adhesion molecules. During neurogenesis, involved in cell autonomous Q.p neuroblast asymmetric divisions that generate one precursor cell and one apoptotic cell, probably by controlling endocytosis. Plays a role in maintaining mitochondrial morphology. This is ADP-ribosylation factor 1-like 2 from Caenorhabditis elegans.